Consider the following 168-residue polypeptide: DNA damage-inducible transcript 3 protein (168 aa).

Residues 10–18 (FETVSSWEL) are interaction with TRIB3. Positions 10 to 26 (FETVSSWELEAWYEDLQ) are N-terminal. A phosphoserine; by CK2 mark is found at S14, S15, S30, and S31. The interval 34–130 (IGGTYISSPG…EKEQENERKV (97 aa)) is disordered. Positions 73–88 (TSTSQSPRSPDSSQSS) are enriched in low complexity. 2 positions are modified to phosphoserine; by MAPK14: S78 and S81. One can recognise a bZIP domain in the interval 98–161 (QGRTRKRKQS…ETTRRALIDR (64 aa)). Positions 100–129 (RTRKRKQSGQCAARAGKQRMKEKEQENERK) are basic motif. The span at 118 to 130 (RMKEKEQENERKV) shows a compositional bias: basic and acidic residues. Residues 133–147 (LAEENERLKLEIERL) are leucine-zipper.

The protein belongs to the bZIP family. Heterodimer. Interacts with TCF7L2/TCF4, EP300/P300, HDAC1, HDAC5 and HDAC6. Interacts with TRIB3 which blocks its association with EP300/P300. Interacts with FOXO3, CEBPB and ATF4. Ubiquitinated, leading to its degradation by the proteasome. In terms of processing, phosphorylation at serine residues by MAPK14 enhances its transcriptional activation activity while phosphorylation at serine residues by CK2 inhibits its transcriptional activation activity.

Its subcellular location is the cytoplasm. The protein resides in the nucleus. Multifunctional transcription factor in ER stress response. Plays an essential role in the response to a wide variety of cell stresses and induces cell cycle arrest and apoptosis in response to ER stress. Plays a dual role both as an inhibitor of CCAAT/enhancer-binding protein (C/EBP) function and as an activator of other genes. Acts as a dominant-negative regulator of C/EBP-induced transcription: dimerizes with members of the C/EBP family, impairs their association with C/EBP binding sites in the promoter regions, and inhibits the expression of C/EBP regulated genes. Positively regulates the transcription of TRIB3, IL6, IL8, IL23, TNFRSF10B/DR5, PPP1R15A/GADD34, BBC3/PUMA, BCL2L11/BIM and ERO1L. Negatively regulates; expression of BCL2 and MYOD1, ATF4-dependent transcriptional activation of asparagine synthetase (ASNS), CEBPA-dependent transcriptional activation of hepcidin (HAMP) and CEBPB-mediated expression of peroxisome proliferator-activated receptor gamma (PPARG). Inhibits the canonical Wnt signaling pathway by binding to TCF7L2/TCF4, impairing its DNA-binding properties and repressing its transcriptional activity. Plays a regulatory role in the inflammatory response through the induction of caspase-11 (CASP4/CASP11) which induces the activation of caspase-1 (CASP1) and both these caspases increase the activation of pro-IL1B to mature IL1B which is involved in the inflammatory response. Acts as a major regulator of postnatal neovascularization through regulation of endothelial nitric oxide synthase (NOS3)-related signaling. The protein is DNA damage-inducible transcript 3 protein (Ddit3) of Rattus norvegicus (Rat).